The following is a 458-amino-acid chain: N-acetylgalactosamine kinase (458 aa).

Residues Arg-43, Glu-49, His-50, and Asp-52 each contribute to the alpha-D-galactose site. Positions 143, 145, and 146 each coordinate ATP. Residue Asp-190 participates in alpha-D-galactose binding. Asp-190 serves as the catalytic Proton acceptor. Positions 233 and 234 each coordinate ATP.

This sequence belongs to the GHMP kinase family. GalK subfamily. Monomer.

It catalyses the reaction N-acetyl-alpha-D-galactosamine + ATP = N-acetyl-alpha-D-galactosamine 1-phosphate + ADP + H(+). Functionally, acts on GalNAc. Also acts as a galactokinase when galactose is present at high concentrations. This Mus musculus (Mouse) protein is N-acetylgalactosamine kinase (Galk2).